We begin with the raw amino-acid sequence, 1114 residues long: Isoleucine--tRNA ligase (1114 aa).

A 'HIGH' region motif is present at residues 61–71; the sequence is PTANGQPGTHH. The 'KMSKS' region motif lies at 640 to 644; the sequence is KMSKH. K643 is a binding site for ATP.

The protein belongs to the class-I aminoacyl-tRNA synthetase family. IleS type 2 subfamily. In terms of assembly, monomer. Requires Zn(2+) as cofactor.

The protein resides in the cytoplasm. It catalyses the reaction tRNA(Ile) + L-isoleucine + ATP = L-isoleucyl-tRNA(Ile) + AMP + diphosphate. Functionally, catalyzes the attachment of isoleucine to tRNA(Ile). As IleRS can inadvertently accommodate and process structurally similar amino acids such as valine, to avoid such errors it has two additional distinct tRNA(Ile)-dependent editing activities. One activity is designated as 'pretransfer' editing and involves the hydrolysis of activated Val-AMP. The other activity is designated 'posttransfer' editing and involves deacylation of mischarged Val-tRNA(Ile). In Cutibacterium acnes (strain DSM 16379 / KPA171202) (Propionibacterium acnes), this protein is Isoleucine--tRNA ligase.